A 629-amino-acid polypeptide reads, in one-letter code: tRNA uridine 5-carboxymethylaminomethyl modification enzyme MnmG (629 aa).

Residues 15-20 (GAGHAG), V127, and S182 each bind FAD. The interval 203–226 (TPPRVKSSTIDYSKTEEQPGDDHP) is disordered. A compositionally biased stretch (basic and acidic residues) spans 215 to 226 (SKTEEQPGDDHP). NAD(+) is bound at residue 274-288 (GARYCPSIEDKIVRF). Residue Q371 coordinates FAD.

It belongs to the MnmG family. In terms of assembly, homodimer. Heterotetramer of two MnmE and two MnmG subunits. FAD serves as cofactor.

The protein resides in the cytoplasm. In terms of biological role, NAD-binding protein involved in the addition of a carboxymethylaminomethyl (cmnm) group at the wobble position (U34) of certain tRNAs, forming tRNA-cmnm(5)s(2)U34. This chain is tRNA uridine 5-carboxymethylaminomethyl modification enzyme MnmG, found in Listeria innocua serovar 6a (strain ATCC BAA-680 / CLIP 11262).